The following is a 171-amino-acid chain: Ribosome maturation factor RimM (171 aa).

The PRC barrel domain maps to glutamate 97–leucine 170.

This sequence belongs to the RimM family. In terms of assembly, binds ribosomal protein uS19.

The protein resides in the cytoplasm. Functionally, an accessory protein needed during the final step in the assembly of 30S ribosomal subunit, possibly for assembly of the head region. Essential for efficient processing of 16S rRNA. May be needed both before and after RbfA during the maturation of 16S rRNA. It has affinity for free ribosomal 30S subunits but not for 70S ribosomes. The polypeptide is Ribosome maturation factor RimM (Bacillus cereus (strain ZK / E33L)).